A 337-amino-acid chain; its full sequence is Anthranilate phosphoribosyltransferase (337 aa).

Residues glycine 81, 84–85 (GD), serine 89, 91–94 (NVST), 109–117 (KHGNRAATS), and alanine 121 contribute to the 5-phospho-alpha-D-ribose 1-diphosphate site. Glycine 81 lines the anthranilate pocket. Mg(2+) is bound at residue serine 93. Asparagine 112 provides a ligand contact to anthranilate. Arginine 167 provides a ligand contact to anthranilate. Positions 226 and 227 each coordinate Mg(2+).

This sequence belongs to the anthranilate phosphoribosyltransferase family. As to quaternary structure, homodimer. The cofactor is Mg(2+).

The catalysed reaction is N-(5-phospho-beta-D-ribosyl)anthranilate + diphosphate = 5-phospho-alpha-D-ribose 1-diphosphate + anthranilate. It participates in amino-acid biosynthesis; L-tryptophan biosynthesis; L-tryptophan from chorismate: step 2/5. Catalyzes the transfer of the phosphoribosyl group of 5-phosphorylribose-1-pyrophosphate (PRPP) to anthranilate to yield N-(5'-phosphoribosyl)-anthranilate (PRA). In Methylorubrum populi (strain ATCC BAA-705 / NCIMB 13946 / BJ001) (Methylobacterium populi), this protein is Anthranilate phosphoribosyltransferase.